The primary structure comprises 718 residues: Exostosin-2 (718 aa).

The Cytoplasmic portion of the chain corresponds to 1 to 25 (MCASVKYNIRGPALIPRMKTKHRIY). The chain crosses the membrane as a helical; Signal-anchor for type II membrane protein span at residues 26 to 46 (YITLFSIVLLGLIATGMFQFW). The Lumenal segment spans residues 47-718 (PHSIESSNDW…LKSFPNIGSL (672 aa)). Cystine bridges form between C85–C90, C96–C151, C286–C300, and C318–C339. N-linked (GlcNAc...) asparagine glycosylation is present at N288. The UDP site is built by L461, R465, N490, and N517. UDP-N-acetyl-alpha-D-glucosamine is bound by residues R465, N490, N517, R522, D538, D539, and D540. UDP-binding residues include D538 and D539. Position 540 (D540) interacts with Mn(2+). 2 residues coordinate a protein: Y582 and S584. Cysteines 626 and 676 form a disulfide. Residues E627 and D628 each contribute to the UDP-N-acetyl-alpha-D-glucosamine site. An N-linked (GlcNAc...) asparagine glycan is attached at N637. A protein-binding residues include K651 and K653. R673 provides a ligand contact to UDP-N-acetyl-alpha-D-glucosamine.

It belongs to the glycosyltransferase 47 family. As to quaternary structure, part of the heparan sulfate polymerase, a dimeric complex composed of EXT1 and EXT2. Could also form homooligomeric complexes. Interacts with NDST1. Interacts with GALNT5. The cofactor is Mn(2+). In terms of processing, N-glycosylated at Asn-637. A soluble form is generated by proteolytic processing. As to expression, widely expressed.

The protein resides in the golgi apparatus membrane. It is found in the golgi apparatus. It localises to the cis-Golgi network membrane. The protein localises to the endoplasmic reticulum membrane. Its subcellular location is the secreted. It catalyses the reaction 3-O-{[(1-&gt;4)-beta-D-GlcA-(1-&gt;4)-alpha-D-GlcNAc](n)-(1-&gt;4)-beta-D-GlcA-(1-&gt;3)-beta-D-Gal-(1-&gt;3)-beta-D-Gal-(1-&gt;4)-beta-D-Xyl}-L-seryl-[protein] + UDP-N-acetyl-alpha-D-glucosamine = 3-O-{alpha-D-GlcNAc-[(1-&gt;4)-beta-D-GlcA-(1-&gt;4)-alpha-D-GlcNAc](n)-(1-&gt;4)-beta-D-GlcA-(1-&gt;3)-beta-D-Gal-(1-&gt;3)-beta-D-Gal-(1-&gt;4)-beta-D-Xyl}-L-seryl-[protein] + UDP + H(+). It functions in the pathway protein modification; protein glycosylation. Glycosyltransferase forming with EXT1 the heterodimeric heparan sulfate polymerase which catalyzes the elongation of the heparan sulfate glycan backbone. Glycan backbone extension consists in the alternating transfer of (1-&gt;4)-beta-D-GlcA and (1-&gt;4)-alpha-D-GlcNAc residues from their respective UDP-sugar donors. Both EXT1 and EXT2 are required for the full activity of the polymerase since EXT1 bears the N-acetylglucosaminyl-proteoglycan 4-beta-glucuronosyltransferase activity within the complex while EXT2 carries the glucuronosyl-N-acetylglucosaminyl-proteoglycan 4-alpha-N-acetylglucosaminyltransferase activity. Heparan sulfate proteoglycans are ubiquitous components of the extracellular matrix and play an important role in tissue homeostasis and signaling. The sequence is that of Exostosin-2 from Homo sapiens (Human).